The following is a 245-amino-acid chain: Probable transcriptional regulatory protein BF2589 (245 aa).

Residues 225–245 form a disordered region; sequence EDEDVQNVYTNMKPADNEGEE.

This sequence belongs to the TACO1 family.

The protein resides in the cytoplasm. This is Probable transcriptional regulatory protein BF2589 from Bacteroides fragilis (strain ATCC 25285 / DSM 2151 / CCUG 4856 / JCM 11019 / LMG 10263 / NCTC 9343 / Onslow / VPI 2553 / EN-2).